A 339-amino-acid polypeptide reads, in one-letter code: Ketol-acid reductoisomerase (NADP(+)) (339 aa).

The KARI N-terminal Rossmann domain maps to 1–182 (MRVYYDRDAD…GGGRSGVIET (182 aa)). NADP(+)-binding positions include 24 to 27 (YGSQ), Arg48, Ser51, Thr53, and 83 to 86 (DELQ). The active site involves His108. Gly134 is an NADP(+) binding site. One can recognise a KARI C-terminal knotted domain in the interval 183-328 (TFKEECETDL…EKLRGMMPWI (146 aa)). Mg(2+) contacts are provided by Asp191, Glu195, Glu227, and Glu231. Residue Ser252 coordinates substrate.

It belongs to the ketol-acid reductoisomerase family. Requires Mg(2+) as cofactor.

The enzyme catalyses (2R)-2,3-dihydroxy-3-methylbutanoate + NADP(+) = (2S)-2-acetolactate + NADPH + H(+). It catalyses the reaction (2R,3R)-2,3-dihydroxy-3-methylpentanoate + NADP(+) = (S)-2-ethyl-2-hydroxy-3-oxobutanoate + NADPH + H(+). It functions in the pathway amino-acid biosynthesis; L-isoleucine biosynthesis; L-isoleucine from 2-oxobutanoate: step 2/4. It participates in amino-acid biosynthesis; L-valine biosynthesis; L-valine from pyruvate: step 2/4. Functionally, involved in the biosynthesis of branched-chain amino acids (BCAA). Catalyzes an alkyl-migration followed by a ketol-acid reduction of (S)-2-acetolactate (S2AL) to yield (R)-2,3-dihydroxy-isovalerate. In the isomerase reaction, S2AL is rearranged via a Mg-dependent methyl migration to produce 3-hydroxy-3-methyl-2-ketobutyrate (HMKB). In the reductase reaction, this 2-ketoacid undergoes a metal-dependent reduction by NADPH to yield (R)-2,3-dihydroxy-isovalerate. The sequence is that of Ketol-acid reductoisomerase (NADP(+)) from Brucella anthropi (strain ATCC 49188 / DSM 6882 / CCUG 24695 / JCM 21032 / LMG 3331 / NBRC 15819 / NCTC 12168 / Alc 37) (Ochrobactrum anthropi).